Reading from the N-terminus, the 52-residue chain is Protein RepA (52 aa).

The segment at residues 20-40 (KLEELAQKYGMTKSGLVNFLV) is a DNA-binding region (H-T-H motif).

The protein belongs to the transcriptional regulatory CopG/NikR family. Homodimer.

Functionally, regulates the plasmid copy number. RepA binds to the repAB promoter thus controlling the synthesis of the plasmid replication initiator protein RepB. The polypeptide is Protein RepA (repA) (Lactiplantibacillus plantarum (Lactobacillus plantarum)).